The primary structure comprises 146 residues: Large ribosomal subunit protein uL15 (146 aa).

Residues M1 to P62 are disordered. Residues T10 to R21 are compositionally biased toward basic residues. The segment covering T42–G52 has biased composition (gly residues).

The protein belongs to the universal ribosomal protein uL15 family. In terms of assembly, part of the 50S ribosomal subunit.

Functionally, binds to the 23S rRNA. This Natranaerobius thermophilus (strain ATCC BAA-1301 / DSM 18059 / JW/NM-WN-LF) protein is Large ribosomal subunit protein uL15.